Consider the following 541-residue polypeptide: Carotenoid 9,10(9',10')-cleavage dioxygenase 1 (541 aa).

The Fe cation site is built by His-222, His-270, His-336, and His-526.

This sequence belongs to the carotenoid oxygenase family. It depends on Fe(2+) as a cofactor.

It carries out the reaction all-trans-zeaxanthin + 2 O2 = 4,9-dimethyldodeca-2,4,6,8,10-pentaenedial + 2 (3R)-hydroxy-beta-ionone. Its function is as follows. Cleaves a variety of carotenoids at the 9-10 and 9'-10' double bonds. Probably not involved in abscisic acid biosynthesis. The polypeptide is Carotenoid 9,10(9',10')-cleavage dioxygenase 1 (CCD1) (Pisum sativum (Garden pea)).